A 21-amino-acid polypeptide reads, in one-letter code: Conchiolin protein p20 (21 aa).

Residues Y1 to P14 are compositionally biased toward low complexity. The disordered stretch occupies residues Y1–Y21.

The protein belongs to the N16 matrix protein family. In terms of assembly, homooligomer; disulfide-linked. May also be disulfide-linked to insoluble organic matrix. Post-translationally, according to PubMed:11250534, amino acids 4 and 11 may be sulfated or phosphorylated. By similarity with the N14 matrix protein, amino-acid 4 may be a cysteine involved in a disulfide bond. In terms of tissue distribution, component of conchiolin, the organic matrix of nacre. Is dispersed in calcium carbonate and also linked by disulfide bonds to the organic core of nacre.

The protein resides in the secreted. It is found in the extracellular space. Its subcellular location is the extracellular matrix. Its function is as follows. May be specifically involved in the formation of the nacreous layer. The polypeptide is Conchiolin protein p20 (Pinctada maxima (Silver-lipped pearl oyster)).